The primary structure comprises 997 residues: Chromosomal passenger complex protein bir1 (997 aa).

BIR repeat units follow at residues 25–99 (RLDT…PWAY) and 120–194 (REQT…VFFT). Residues cysteine 163, cysteine 166, histidine 183, and cysteine 190 each contribute to the Zn(2+) site. Disordered stretches follow at residues 217–329 (EDLT…FSKG), 370–527 (TVSD…ENDE), 682–701 (TRDVSSPVSDEKSENVNHEE), 755–782 (SPKLQSKNNQTVEAVNTETSDKLQEKEA), and 817–838 (RTSVQNGTRSVSKNTPEKETKV). Positions 240-252 (TLNFSPSRKNNLN) are enriched in polar residues. The segment covering 288-299 (PRRKNKSPKKSK) has biased composition (basic residues). Over residues 311-320 (SDEDEDDDDL) the composition is skewed to acidic residues. The span at 370 to 392 (TVSDITGHQSVTDESDEQNNCMS) shows a compositional bias: polar residues. The segment covering 408–423 (SVVSKSKEISSSVSSV) has biased composition (low complexity). The span at 426 to 451 (EQNHTEKQVAIETPEQQKVEKEDEHL) shows a compositional bias: basic and acidic residues. Composition is skewed to polar residues over residues 463–476 (KQPISSKPSTSSPD) and 485–512 (RVSSSSFRDKILQTNFSPRSTIDSFSNI). Polar residues predominate over residues 756–772 (PKLQSKNNQTVEAVNTE). The segment covering 773-782 (TSDKLQEKEA) has biased composition (basic and acidic residues). The span at 817 to 830 (RTSVQNGTRSVSKN) shows a compositional bias: polar residues.

In terms of assembly, component of the CPC complex at least composed of ark1, bir1 and pic1. Interacts with the mitotic checkpoint complex (MCC) subunit mad3. In terms of processing, phosphorylated by ark1.

It is found in the nucleus. The protein localises to the cytoplasm. It localises to the cytoskeleton. The protein resides in the spindle. Its subcellular location is the chromosome. It is found in the centromere. Its function is as follows. Component of the chromosomal passenger complex (CPC), a complex that acts as a key regulator of chromosome segregation and cytokinesis. Has a role in chromosome segregation by recruiting condensin and ark1 kinase to appropriate sites as the cell progresses through mitosis. Ark1 activity depends upon bir1 function and phosphorylation. Ark1 with bir1 function is required for full-scale association with kinetochores and formation of a complex with mad3. This Schizosaccharomyces pombe (strain 972 / ATCC 24843) (Fission yeast) protein is Chromosomal passenger complex protein bir1 (bir1).